The chain runs to 394 residues: Elongation factor Tu 2 (394 aa).

The 195-residue stretch at 10–204 (KPHVNVGTIG…ALDSYIPEPE (195 aa)) folds into the tr-type G domain. The segment at 19-26 (GHVDHGKT) is G1. Residue 19 to 26 (GHVDHGKT) coordinates GTP. A Mg(2+)-binding site is contributed by T26. The G2 stretch occupies residues 60-64 (GITIS). The G3 stretch occupies residues 81–84 (DCPG). Residues 81–85 (DCPGH) and 136–139 (NKCD) contribute to the GTP site. The segment at 136 to 139 (NKCD) is G4. Residues 174–176 (SAL) are G5.

It belongs to the TRAFAC class translation factor GTPase superfamily. Classic translation factor GTPase family. EF-Tu/EF-1A subfamily. In terms of assembly, monomer.

It is found in the cytoplasm. It catalyses the reaction GTP + H2O = GDP + phosphate + H(+). Functionally, GTP hydrolase that promotes the GTP-dependent binding of aminoacyl-tRNA to the A-site of ribosomes during protein biosynthesis. The chain is Elongation factor Tu 2 from Photorhabdus laumondii subsp. laumondii (strain DSM 15139 / CIP 105565 / TT01) (Photorhabdus luminescens subsp. laumondii).